A 312-amino-acid polypeptide reads, in one-letter code: Malate dehydrogenase (312 aa).

Residues 7 to 13 (GAAGGIG) and aspartate 34 contribute to the NAD(+) site. 2 residues coordinate substrate: arginine 81 and arginine 87. NAD(+) is bound by residues asparagine 94 and 117–119 (ITN). Substrate-binding residues include asparagine 119 and arginine 153. Catalysis depends on histidine 177, which acts as the Proton acceptor. Residue methionine 228 coordinates NAD(+).

Belongs to the LDH/MDH superfamily. MDH type 1 family. In terms of assembly, homodimer.

The enzyme catalyses (S)-malate + NAD(+) = oxaloacetate + NADH + H(+). Catalyzes the reversible oxidation of malate to oxaloacetate. In Mannheimia succiniciproducens (strain KCTC 0769BP / MBEL55E), this protein is Malate dehydrogenase.